The sequence spans 130 residues: Small ribosomal subunit protein uS8 (130 aa).

This sequence belongs to the universal ribosomal protein uS8 family. As to quaternary structure, part of the 30S ribosomal subunit. Contacts proteins S5 and S12.

Functionally, one of the primary rRNA binding proteins, it binds directly to 16S rRNA central domain where it helps coordinate assembly of the platform of the 30S subunit. This chain is Small ribosomal subunit protein uS8, found in Mannheimia succiniciproducens (strain KCTC 0769BP / MBEL55E).